The sequence spans 320 residues: Ribose-phosphate pyrophosphokinase (320 aa).

ATP is bound by residues 43 to 45 (DGE) and 102 to 103 (RQ). Residues His-136 and Asp-178 each coordinate Mg(2+). Lys-201 is a catalytic residue. D-ribose 5-phosphate contacts are provided by residues Arg-203, Asp-227, and 231–235 (DTAGT).

This sequence belongs to the ribose-phosphate pyrophosphokinase family. Class I subfamily. Homohexamer. It depends on Mg(2+) as a cofactor.

It is found in the cytoplasm. It catalyses the reaction D-ribose 5-phosphate + ATP = 5-phospho-alpha-D-ribose 1-diphosphate + AMP + H(+). The protein operates within metabolic intermediate biosynthesis; 5-phospho-alpha-D-ribose 1-diphosphate biosynthesis; 5-phospho-alpha-D-ribose 1-diphosphate from D-ribose 5-phosphate (route I): step 1/1. Its function is as follows. Involved in the biosynthesis of the central metabolite phospho-alpha-D-ribosyl-1-pyrophosphate (PRPP) via the transfer of pyrophosphoryl group from ATP to 1-hydroxyl of ribose-5-phosphate (Rib-5-P). This Clostridium tetani (strain Massachusetts / E88) protein is Ribose-phosphate pyrophosphokinase.